We begin with the raw amino-acid sequence, 356 residues long: HTH-type transcriptional regulator AglR (356 aa).

Residues Met-1–Thr-57 form the HTH lacI-type domain. The H-T-H motif DNA-binding region spans Leu-5–Asn-24. The interval Thr-337–Ala-356 is disordered.

Its function is as follows. Probable regulatory protein for the binding-protein-dependent transport system for alpha-glucosides such as sucrose, maltose and trehalose. This is HTH-type transcriptional regulator AglR (aglR) from Rhizobium meliloti (strain 1021) (Ensifer meliloti).